An 836-amino-acid chain; its full sequence is Protein translocase subunit SecA (836 aa).

Residues Q85, 103-107 (GEGKT), and D492 each bind ATP. The interval 786-817 (REQVAKETSTNQGGDDTLKKQPIKKEPKIGRN) is disordered. Positions 801–816 (DTLKKQPIKKEPKIGR) are enriched in basic and acidic residues. Zn(2+) is bound by residues C820, C822, C831, and C832.

Belongs to the SecA family. As to quaternary structure, monomer and homodimer. Part of the essential Sec protein translocation apparatus which comprises SecA, SecYEG and auxiliary proteins SecDF. Other proteins may also be involved. Zn(2+) serves as cofactor.

It is found in the cell membrane. Its subcellular location is the cytoplasm. It carries out the reaction ATP + H2O + cellular proteinSide 1 = ADP + phosphate + cellular proteinSide 2.. Its function is as follows. Part of the Sec protein translocase complex. Interacts with the SecYEG preprotein conducting channel. Has a central role in coupling the hydrolysis of ATP to the transfer of proteins into and across the cell membrane, serving as an ATP-driven molecular motor driving the stepwise translocation of polypeptide chains across the membrane. In Clostridium tetani (strain Massachusetts / E88), this protein is Protein translocase subunit SecA.